Reading from the N-terminus, the 102-residue chain is Small ribosomal subunit protein uS10 (102 aa).

The protein belongs to the universal ribosomal protein uS10 family. In terms of assembly, part of the 30S ribosomal subunit.

Functionally, involved in the binding of tRNA to the ribosomes. In Planobispora rosea, this protein is Small ribosomal subunit protein uS10.